A 472-amino-acid polypeptide reads, in one-letter code: 3-isopropylmalate dehydratase large subunit (472 aa).

Residues C353, C414, and C417 each contribute to the [4Fe-4S] cluster site.

It belongs to the aconitase/IPM isomerase family. LeuC type 1 subfamily. As to quaternary structure, heterodimer of LeuC and LeuD. It depends on [4Fe-4S] cluster as a cofactor.

It catalyses the reaction (2R,3S)-3-isopropylmalate = (2S)-2-isopropylmalate. It participates in amino-acid biosynthesis; L-leucine biosynthesis; L-leucine from 3-methyl-2-oxobutanoate: step 2/4. In terms of biological role, catalyzes the isomerization between 2-isopropylmalate and 3-isopropylmalate, via the formation of 2-isopropylmaleate. This chain is 3-isopropylmalate dehydratase large subunit, found in Acinetobacter baumannii (strain AB307-0294).